Consider the following 378-residue polypeptide: Sphingosine 1-phosphate receptor 3 (378 aa).

Topologically, residues 1-44 (MATTHAQGHQPVLGNDTLREHYDYVGKLAGRLRDPPEGGTLITT) are extracellular. An N-linked (GlcNAc...) asparagine glycan is attached at N15. Residues 45-65 (ILFLVTCSFIVLENLMVLIAI) traverse the membrane as a helical segment. The Cytoplasmic portion of the chain corresponds to 66 to 74 (WKNNKFHNR). The helical transmembrane segment at 75–95 (MYFFIGNLALCDLLAGIAYKV) threads the bilayer. Topologically, residues 96–115 (NILMSGRKTFSLSPTVWFLR) are extracellular. Residues 116–136 (EGSMFVALGASTCSLLAIAIE) traverse the membrane as a helical segment. Over 137 to 154 (RHLTMIKMRPYDANKKHR) the chain is Cytoplasmic. Residues 155–175 (VFLLIGMCWLIAFSLGALPIL) traverse the membrane as a helical segment. Over 176–196 (GWNCLENFPDCSTILPLYSKK) the chain is Extracellular. The helical transmembrane segment at 197–217 (YIAFLISIFTAILVTIVILYA) threads the bilayer. At 218–244 (RIYCLVKSSSRRVANHNSERSMALLRT) the chain is on the cytoplasmic side. Residues 245-265 (VVIVVSVFIACWSPLFILFLI) traverse the membrane as a helical segment. Residues 266–281 (DVACRAKECSILFKSQ) lie on the Extracellular side of the membrane. The chain crosses the membrane as a helical span at residues 282–302 (WFIMLAVLNSAMNPVIYTLAS). At 303–378 (KEMRRAFFRL…RSFQNGVLCK (76 aa)) the chain is on the cytoplasmic side. Residues 323–354 (TQASPMQPALDPSRSKSSSSNNSSHSPKVKED) form a disordered region. A Phosphoserine modification is found at S326. The segment covering 337–348 (SKSSSSNNSSHS) has biased composition (low complexity).

The protein belongs to the G-protein coupled receptor 1 family. Most abundant in heart, lung, kidney and spleen; low but detectable in brain, thymus, muscle and testis; and nearly undetectable in liver, stomach, and intestine. Expressed in embryonic lung from embryonic day 14-18. Also abundantly detected in embryonic nasal cartilage, sphenoid bone, vena cava, Meckel's cartilage/incisor teeth, genital tubercle and bladder.

The protein resides in the cell membrane. In terms of biological role, receptor for the lysosphingolipid sphingosine 1-phosphate (S1P). S1P is a bioactive lysophospholipid that elicits diverse physiological effect on most types of cells and tissues. The protein is Sphingosine 1-phosphate receptor 3 (S1pr3) of Mus musculus (Mouse).